A 165-amino-acid polypeptide reads, in one-letter code: MRVALFPGSFDPVTWGHIDLVKRASLIFDKVIVLVANNSAKNYLLSDVERYELTFEVIASLGWSKIFVDRYDGIILDYALKNDIGFIVRGVRAFHDFEFEFERYVVNNKLSPLVDTIFLPSSDRYLFVRSDLVKELIKNKNFDLSSFIPELVQKKLKSKFIDKLS.

Position 9 (serine 9) interacts with substrate. Residues 9–10 and histidine 17 contribute to the ATP site; that span reads SF. 3 residues coordinate substrate: lysine 41, isoleucine 75, and arginine 89. ATP is bound by residues 90-92, glutamate 100, and 125-131; these read GVR and YLFVRSD.

This sequence belongs to the bacterial CoaD family. As to quaternary structure, homohexamer. Mg(2+) is required as a cofactor.

It localises to the cytoplasm. The catalysed reaction is (R)-4'-phosphopantetheine + ATP + H(+) = 3'-dephospho-CoA + diphosphate. The protein operates within cofactor biosynthesis; coenzyme A biosynthesis; CoA from (R)-pantothenate: step 4/5. Functionally, reversibly transfers an adenylyl group from ATP to 4'-phosphopantetheine, yielding dephospho-CoA (dPCoA) and pyrophosphate. This is Phosphopantetheine adenylyltransferase from Borrelia hermsii (strain HS1 / DAH).